The following is a 171-amino-acid chain: Protein-export protein SecB (171 aa).

This sequence belongs to the SecB family. As to quaternary structure, homotetramer, a dimer of dimers. One homotetramer interacts with 1 SecA dimer.

It localises to the cytoplasm. One of the proteins required for the normal export of preproteins out of the cell cytoplasm. It is a molecular chaperone that binds to a subset of precursor proteins, maintaining them in a translocation-competent state. It also specifically binds to its receptor SecA. The protein is Protein-export protein SecB of Histophilus somni (strain 2336) (Haemophilus somnus).